Here is a 375-residue protein sequence, read N- to C-terminus: Succinyl-diaminopimelate desuccinylase (375 aa).

Position 66 (His66) interacts with Zn(2+). Residue Asp68 is part of the active site. Asp99 serves as a coordination point for Zn(2+). Glu133 (proton acceptor) is an active-site residue. 3 residues coordinate Zn(2+): Glu134, Glu162, and His348.

The protein belongs to the peptidase M20A family. DapE subfamily. Homodimer. Zn(2+) is required as a cofactor. It depends on Co(2+) as a cofactor.

The catalysed reaction is N-succinyl-(2S,6S)-2,6-diaminopimelate + H2O = (2S,6S)-2,6-diaminopimelate + succinate. It functions in the pathway amino-acid biosynthesis; L-lysine biosynthesis via DAP pathway; LL-2,6-diaminopimelate from (S)-tetrahydrodipicolinate (succinylase route): step 3/3. Catalyzes the hydrolysis of N-succinyl-L,L-diaminopimelic acid (SDAP), forming succinate and LL-2,6-diaminopimelate (DAP), an intermediate involved in the bacterial biosynthesis of lysine and meso-diaminopimelic acid, an essential component of bacterial cell walls. This Escherichia coli O139:H28 (strain E24377A / ETEC) protein is Succinyl-diaminopimelate desuccinylase.